The chain runs to 101 residues: Urease subunit beta (101 aa).

It belongs to the urease beta subunit family. As to quaternary structure, heterotrimer of UreA (gamma), UreB (beta) and UreC (alpha) subunits. Three heterotrimers associate to form the active enzyme.

Its subcellular location is the cytoplasm. It carries out the reaction urea + 2 H2O + H(+) = hydrogencarbonate + 2 NH4(+). The protein operates within nitrogen metabolism; urea degradation; CO(2) and NH(3) from urea (urease route): step 1/1. The polypeptide is Urease subunit beta (Rhizobium johnstonii (strain DSM 114642 / LMG 32736 / 3841) (Rhizobium leguminosarum bv. viciae)).